Here is a 158-residue protein sequence, read N- to C-terminus: MKKKNNIILTIQKNCKNTKNIPKKYIFEKWIKKVLYKKKNVNLINIRIVDEREMKNINLKYRGKNKSTNILSFKFDLFINKNQTLLGDLVLCKKIIEKESLKYQKTLESRWAHMIIHGTLHLLGYDHKNKKEKKIMEKIENKIMLFLNYEKPYFMKSS.

3 residues coordinate Zn(2+): histidine 117, histidine 121, and histidine 127.

The protein belongs to the endoribonuclease YbeY family. It depends on Zn(2+) as a cofactor.

It localises to the cytoplasm. Functionally, single strand-specific metallo-endoribonuclease involved in late-stage 70S ribosome quality control and in maturation of the 3' terminus of the 16S rRNA. This is Endoribonuclease YbeY from Buchnera aphidicola subsp. Schizaphis graminum (strain Sg).